A 325-amino-acid polypeptide reads, in one-letter code: Lipid droplet-associated hydrolase (325 aa).

Catalysis depends on serine 139, which acts as the Nucleophile. Active-site charge relay system residues include aspartate 271 and histidine 300.

This sequence belongs to the AB hydrolase superfamily. LDAH family.

The protein localises to the lipid droplet. It is found in the endoplasmic reticulum. The catalysed reaction is a cholesterol ester + H2O = cholesterol + a fatty acid + H(+). Functionally, probable serine lipid hydrolase associated with lipid droplets. Has low cholesterol esterase activity. Appears to lack triglyceride lipase activity. Involved in cholesterol and triglyceride homeostasis; stimulates cellular triglyceride accumulation and cellular cholesterol release. Acts antagonistically with PNPLA2/ATGL in regulation of cellular lipid stores. May regulate triglyceride accumulation indirectly through stimulation of PNPLA2/ATGL ubiquitination and proteasomal degradation. Promotes microtubule-dependent lipid droplet fusion. Highly expressed in macrophage-rich areas in atherosclerotic lesions, suggesting that it could promote cholesterol ester turnover in macrophages. The sequence is that of Lipid droplet-associated hydrolase from Pongo abelii (Sumatran orangutan).